The following is a 354-amino-acid chain: Uroporphyrinogen decarboxylase (354 aa).

Residues Arg25–Arg29, Asp75, Tyr152, Thr207, and His330 each bind substrate.

The protein belongs to the uroporphyrinogen decarboxylase family. Homodimer.

Its subcellular location is the cytoplasm. It carries out the reaction uroporphyrinogen III + 4 H(+) = coproporphyrinogen III + 4 CO2. Its pathway is porphyrin-containing compound metabolism; protoporphyrin-IX biosynthesis; coproporphyrinogen-III from 5-aminolevulinate: step 4/4. Functionally, catalyzes the decarboxylation of four acetate groups of uroporphyrinogen-III to yield coproporphyrinogen-III. The sequence is that of Uroporphyrinogen decarboxylase from Xanthomonas oryzae pv. oryzae (strain MAFF 311018).